The chain runs to 199 residues: Recombination protein RecR (199 aa).

Residues 56–71 (CATCGNVAQEELCNIC) form a C4-type zinc finger. Residues 79–174 (SVICVVEEPK…KVTRLASGLP (96 aa)) form the Toprim domain.

Belongs to the RecR family.

Its function is as follows. May play a role in DNA repair. It seems to be involved in an RecBC-independent recombinational process of DNA repair. It may act with RecF and RecO. This Streptomyces avermitilis (strain ATCC 31267 / DSM 46492 / JCM 5070 / NBRC 14893 / NCIMB 12804 / NRRL 8165 / MA-4680) protein is Recombination protein RecR.